The chain runs to 418 residues: Mitochondrial outer membrane protein SLC25A46 (418 aa).

A phosphoserine mark is found at S32 and S35. T45 is modified (phosphothreonine). The interval 46–96 (PPDIPGSRNLHWGEKSPSYGVPSAPPTLEGSAEEPFPGGGEGPRPGPSSEQ) is disordered. Residues 96–187 (QLNRFAGFGI…GIISEFTPLP (92 aa)) form a Solcar 1 repeat. A run of 6 helical transmembrane segments spans residues 103 to 123 (FGIG…CIVL), 167 to 187 (FIVQ…TPLP), 202 to 222 (HLLL…ASLI), 258 to 278 (LLPL…HYII), 314 to 334 (FPEL…LYPL), and 382 to 402 (VFGF…HATI). One copy of the Solcar 2 repeat lies at 311–413 (DAYFPELIAN…QITKMIYSTL (103 aa)).

This sequence belongs to the mitochondrial carrier (TC 2.A.29) family. Associates with the mitochondrial contact site and cristae organizing system (MICOS) complex. May associate with the endoplasmic reticulum membrane protein complex (EMC).

Its subcellular location is the mitochondrion outer membrane. Functionally, transmembrane protein of the mitochondrial outer membrane that controls mitochondrial organization. May regulate the assembly of the MICOS (mitochondrial contact site and cristae organizing system) complex which is essential to the biogenesis and dynamics of mitochondrial cristae, the inwards folds of the inner mitochondrial membrane. Through its interaction with the EMC (endoplasmic reticulum membrane protein complex), could regulate mitochondrial lipid homeostasis and thereby mitochondrial fission. In Mus musculus (Mouse), this protein is Mitochondrial outer membrane protein SLC25A46.